We begin with the raw amino-acid sequence, 856 residues long: Protein phosphatase 2C 32 (856 aa).

3 positions are modified to phosphoserine: S152, S189, and S201. The 567-residue stretch at 269 to 835 folds into the PPM-type phosphatase domain; it reads ESCLESNRNL…DDVSVMVVSL (567 aa). Mn(2+) is bound by residues D307 and G308. Disordered regions lie at residues 340–373, 388–407, and 446–485; these read PSED…KSVV, GNTD…GPGK, and NPST…QISS. The segment covering 395–407 has biased composition (low complexity); the sequence is ADGPPGDSAGPGK. The span at 471-485 shows a compositional bias: polar residues; that stretch reads NSGQRHGTKKSQISS. Mn(2+) contacts are provided by D763 and D826.

It belongs to the PP2C family. Mg(2+) serves as cofactor. Mn(2+) is required as a cofactor. As to expression, expressed in roots, leaves, stems, inflorescences, flowers and throughout the shoot meristem.

It localises to the nucleus. The catalysed reaction is O-phospho-L-seryl-[protein] + H2O = L-seryl-[protein] + phosphate. It catalyses the reaction O-phospho-L-threonyl-[protein] + H2O = L-threonyl-[protein] + phosphate. With respect to regulation, insensitive to okadaic acid. In terms of biological role, involved in the regulation of pedicel length and of CLAVATA pathways controlling stem cell identity at shoot and flower meristems. This chain is Protein phosphatase 2C 32 (POL), found in Arabidopsis thaliana (Mouse-ear cress).